The sequence spans 2395 residues: Helicase ssl-1 (2395 aa).

Positions methionine 1–arginine 12 are enriched in low complexity. Residues methionine 1 to aspartate 62 are disordered. The 74-residue stretch at leucine 227 to glycine 300 folds into the HSA domain. Positions leucine 354–isoleucine 363 are enriched in polar residues. 2 disordered regions span residues leucine 354–glutamate 404 and glutamate 444–leucine 504. 3 stretches are compositionally biased toward basic and acidic residues: residues serine 365–lysine 375, lysine 394–glutamate 404, and glutamate 444–lysine 462. Positions threonine 388 to glutamate 464 form a coiled coil. Residues serine 470–aspartate 490 are compositionally biased toward polar residues. In terms of domain architecture, Helicase ATP-binding spans valine 570–threonine 735. An ATP-binding site is contributed by aspartate 583–threonine 590. Residues alanine 963–threonine 982 are disordered. In terms of domain architecture, Helicase C-terminal spans leucine 1196 to threonine 1342. The stretch at lysine 1452–asparagine 1476 forms a coiled coil. 5 disordered regions span residues glutamate 1615–aspartate 1706, serine 1977–alanine 2073, glutamine 2092–arginine 2143, glutamine 2276–valine 2306, and methionine 2350–asparagine 2395. Composition is skewed to low complexity over residues glutamine 1647–glutamine 1669 and leucine 1981–glutamine 1995. Positions asparagine 1996 to asparagine 2019 are enriched in polar residues. Composition is skewed to low complexity over residues leucine 2051 to alanine 2073 and glutamine 2092 to aspartate 2114. Over residues glycine 2115–serine 2129 the composition is skewed to gly residues. The segment covering glutamine 2130–glutamine 2142 has biased composition (low complexity). Residues asparagine 2281–glutamine 2299 are compositionally biased toward gly residues. Low complexity predominate over residues glutamine 2361–proline 2377.

The protein belongs to the SNF2/RAD54 helicase family. SWR1 subfamily.

Its subcellular location is the nucleus. Functionally, probable catalytic component of a chromatin-remodeling complex which mediates the ATP-dependent exchange of histone H2A variant H2AV/htz-1 for H2A, leading to transcriptional regulation of selected genes by chromatin remodeling. Involved in foregut development, and may be involved in vulval development. In Caenorhabditis elegans, this protein is Helicase ssl-1 (ssl-1).